Here is a 508-residue protein sequence, read N- to C-terminus: Photosystem II CP47 reaction center protein (508 aa).

A run of 6 helical transmembrane segments spans residues Ser21–Ser36, Ile101–Trp115, Gly140–Phe156, Ile203–Ser218, Val237–Val252, and Ser457–Arg472.

It belongs to the PsbB/PsbC family. PsbB subfamily. As to quaternary structure, PSII is composed of 1 copy each of membrane proteins PsbA, PsbB, PsbC, PsbD, PsbE, PsbF, PsbH, PsbI, PsbJ, PsbK, PsbL, PsbM, PsbT, PsbX, PsbY, PsbZ, Psb30/Ycf12, at least 3 peripheral proteins of the oxygen-evolving complex and a large number of cofactors. It forms dimeric complexes. Binds multiple chlorophylls. PSII binds additional chlorophylls, carotenoids and specific lipids. is required as a cofactor.

The protein resides in the plastid. Its subcellular location is the chloroplast thylakoid membrane. One of the components of the core complex of photosystem II (PSII). It binds chlorophyll and helps catalyze the primary light-induced photochemical processes of PSII. PSII is a light-driven water:plastoquinone oxidoreductase, using light energy to abstract electrons from H(2)O, generating O(2) and a proton gradient subsequently used for ATP formation. The polypeptide is Photosystem II CP47 reaction center protein (Pelargonium hortorum (Common geranium)).